The primary structure comprises 296 residues: NAD kinase (296 aa).

The active-site Proton acceptor is the D72. NAD(+) is bound by residues 72-73 (DG), 146-147 (ND), R157, K174, D176, 187-192 (TAYALS), and Q247.

This sequence belongs to the NAD kinase family. The cofactor is a divalent metal cation.

Its subcellular location is the cytoplasm. The enzyme catalyses NAD(+) + ATP = ADP + NADP(+) + H(+). Involved in the regulation of the intracellular balance of NAD and NADP, and is a key enzyme in the biosynthesis of NADP. Catalyzes specifically the phosphorylation on 2'-hydroxyl of the adenosine moiety of NAD to yield NADP. In Pseudomonas entomophila (strain L48), this protein is NAD kinase.